A 503-amino-acid chain; its full sequence is Endoglycoceramidase (503 aa).

The signal sequence occupies residues 1–21; that stretch reads MAETQPLVFVLMSISAILTAG. 3 N-linked (GlcNAc...) asparagine glycosylation sites follow: N72, N108, and N205. The active-site Proton donor is the E239. N307, N409, and N485 each carry an N-linked (GlcNAc...) asparagine glycan.

The protein belongs to the glycosyl hydrolase 5 (cellulase A) family.

The protein localises to the secreted. It localises to the nematocyst. It carries out the reaction an oligoglycosyl-(1-&gt;4)-beta-D-glucosyl-(1&lt;-&gt;1)-ceramide + H2O = an oligoglycosyl-(1-&gt;4)-D-glucose + an N-acyl-sphingoid base. With respect to regulation, completely inhibited by Hg(2+). Cu(2+) and zinc have no effect on enzyme activity. Lithium, potassium, manganese, Ni(2+), calcium, magnesium and EDTA have no significant effect on enzyme activity. Enzyme requires presence of detergents such as Triton X-100 and Lubrol PX for the hydrolysis of glycosphingolipids. Taurodeoxycholate strongly inhibits the enzyme activity and SDS completely inhibits the enzyme activity. Functionally, hydrolysis of the glycosidic linkage between oligosaccharides and ceramides of glycosphingolipids, especially b-series polysialogangliosides. The protein is Endoglycoceramidase of Cyanea nozakii (Jellyfish).